The chain runs to 157 residues: Putative gamma-glutamylcyclotransferase CG2811 (157 aa).

A substrate-binding site is contributed by 14-17 (YGTL). The active-site Proton acceptor is Glu89.

This sequence belongs to the gamma-glutamylcyclotransferase family.

Its function is as follows. Putative gamma-glutamylcyclotransferase. This chain is Putative gamma-glutamylcyclotransferase CG2811, found in Drosophila melanogaster (Fruit fly).